We begin with the raw amino-acid sequence, 79 residues long: Toxin ICK-20 (79 aa).

The first 20 residues, 1–20, serve as a signal peptide directing secretion; the sequence is MMKYFLVLCLVVLGVAAVQA. 4 disulfides stabilise this stretch: C43–C57, C50–C61, C56–C78, and C68–C74. Residue N71 is glycosylated (N-linked (GlcNAc...) asparagine).

Belongs to the neurotoxin 13 (insecticidal toxin ABC) family. ICK-21 subfamily. In terms of tissue distribution, expressed by the venom gland.

It is found in the secreted. In terms of biological role, ion channel inhibitor. The polypeptide is Toxin ICK-20 (Trittame loki (Brush-footed trapdoor spider)).